A 75-amino-acid polypeptide reads, in one-letter code: Pi-hexatoxin-Hi1b (75 aa).

6 disulfide bridges follow: Cys3-Cys18, Cys10-Cys23, Cys17-Cys33, Cys40-Cys55, Cys47-Cys60, and Cys54-Cys71. Domain repeat units lie at residues 3 to 33 and 40 to 71; these read CIRKWLSCVDRKNDCCEGLECYKRRHSFEVC and CLVKWKQCDGRERDCCPGLECWKRSGNKSSVC. The tract at residues 3 to 71 is 2 X approximate repeats with cysteine pattern C-C-CC-C-C; the sequence is CIRKWLSCVD…KRSGNKSSVC (69 aa).

The protein belongs to the psalmotoxin-1 family. Double-knot toxin subfamily. As to expression, expressed by the venom gland.

The protein resides in the secreted. Functionally, this toxin potently and selectively inhibits ASIC1a, an isoform of the gene ASIC1. It incompletely inhibits ASIC1a activation in a pH-independent and slowly reversible manner. This toxin acts by binding to and stabilizing the closed state of the channel, thereby impeding the transition into a conducting state. This toxin may bind to the acidic pocket of ASIC1a, since mutation of a key residue of this pocket (Arg-350) abolishes the ability of the toxin to inhibit ASIC1a. In vivo, this toxin protects the brain from neuronal injury when administered up to 8 hours after stroke onset. In Hadronyche infensa (Fraser island funnel-web spider), this protein is Pi-hexatoxin-Hi1b.